A 1083-amino-acid chain; its full sequence is Kinesin-like protein klp-19 (1083 aa).

The region spanning 6–328 (SLRVVVRARP…LRYADRAKQI (323 aa)) is the Kinesin motor domain. Residue 85 to 92 (GQTGSGKT) participates in ATP binding. A coiled-coil region spans residues 408–435 (MSALTQKNSRLEEDKAKLQSMLTDVRNT). Acidic residues predominate over residues 458 to 471 (TEESTTLADDDNDE). The disordered stretch occupies residues 458 to 479 (TEESTTLADDDNDETALGGQDD). A coiled-coil region spans residues 487–650 (LPELQAELDD…KSKLQKREND (164 aa)). A compositionally biased stretch (polar residues) spans 1044–1055 (DDSQPSPSNSTF). Residues 1044–1083 (DDSQPSPSNSTFVIGAAPTSEADGVPPIKRKSRRTDLGPL) form a disordered region.

It belongs to the TRAFAC class myosin-kinesin ATPase superfamily. Kinesin family. In terms of tissue distribution, expressed in the gonad.

It localises to the nucleus. The protein resides in the nucleoplasm. Its subcellular location is the cytoplasm. It is found in the cytoskeleton. The protein localises to the spindle. It localises to the chromosome. Required for chromosome movement and orientation on spindle poles in mitosis and meiosis. May play a role in early anterior-posterior chromosome movement in mitotic embryos. The polypeptide is Kinesin-like protein klp-19 (Caenorhabditis elegans).